The primary structure comprises 54 residues: uncharacterized protein (54 aa).

Residues 32-52 (LFSLLVLIILCFIDPILFYFI) traverse the membrane as a helical segment.

The protein resides in the host membrane. This is an uncharacterized protein from Cassava vein mosaic virus (CsVMV).